The sequence spans 194 residues: Imidazoleglycerol-phosphate dehydratase (194 aa).

The protein belongs to the imidazoleglycerol-phosphate dehydratase family.

It localises to the cytoplasm. It carries out the reaction D-erythro-1-(imidazol-4-yl)glycerol 3-phosphate = 3-(imidazol-4-yl)-2-oxopropyl phosphate + H2O. Its pathway is amino-acid biosynthesis; L-histidine biosynthesis; L-histidine from 5-phospho-alpha-D-ribose 1-diphosphate: step 6/9. The protein is Imidazoleglycerol-phosphate dehydratase of Thermus thermophilus (strain ATCC 27634 / DSM 579 / HB8).